The following is a 287-amino-acid chain: Ribosomal RNA small subunit methyltransferase A (287 aa).

Asn-28, Leu-30, Gly-55, Glu-77, Asp-103, and Asn-123 together coordinate S-adenosyl-L-methionine.

It belongs to the class I-like SAM-binding methyltransferase superfamily. rRNA adenine N(6)-methyltransferase family. RsmA subfamily.

The protein resides in the cytoplasm. The catalysed reaction is adenosine(1518)/adenosine(1519) in 16S rRNA + 4 S-adenosyl-L-methionine = N(6)-dimethyladenosine(1518)/N(6)-dimethyladenosine(1519) in 16S rRNA + 4 S-adenosyl-L-homocysteine + 4 H(+). Specifically dimethylates two adjacent adenosines (A1518 and A1519) in the loop of a conserved hairpin near the 3'-end of 16S rRNA in the 30S particle. May play a critical role in biogenesis of 30S subunits. The sequence is that of Ribosomal RNA small subunit methyltransferase A from Rhodopseudomonas palustris (strain BisA53).